A 190-amino-acid chain; its full sequence is Dynactin subunit 6 (190 aa).

A Phosphothreonine; by CDK1 modification is found at threonine 186.

Belongs to the dynactin subunits 5/6 family. Dynactin subunit 6 subfamily. In terms of assembly, subunit of dynactin, a multiprotein complex part of a tripartite complex with dynein and a adapter, such as BICDL1, BICD2 or HOOK3. The dynactin complex is built around ACTR1A/ACTB filament and consists of an actin-related filament composed of a shoulder domain, a pointed end and a barbed end. Its length is defined by its flexible shoulder domain. The soulder is composed of 2 DCTN1 subunits, 4 DCTN2 and 2 DCTN3. The 4 DCNT2 (via N-terminus) bind the ACTR1A filament and act as molecular rulers to determine the length. The pointed end is important for binding dynein-dynactin cargo adapters. Consists of 4 subunits: ACTR10, DCNT4, DCTN5 and DCTN6. Within the complex DCTN6 forms a heterodimer with DCTN5. The barbed end is composed of a CAPZA1:CAPZB heterodimers, which binds ACTR1A/ACTB filament and dynactin and stabilizes dynactin. Interacts with PLK1. Interacts with N4BP2L1. Phosphorylation at Thr-186 by CDK1 during mitotic prometaphase creates a binding site for PLK1 that facilitates its recruitment to kinetochores.

It localises to the cytoplasm. It is found in the cytoskeleton. The protein resides in the chromosome. Its subcellular location is the centromere. The protein localises to the kinetochore. Functionally, part of the dynactin complex that activates the molecular motor dynein for ultra-processive transport along microtubules. The sequence is that of Dynactin subunit 6 (DCTN6) from Bos taurus (Bovine).